The primary structure comprises 424 residues: Zygote arrest protein 1 (424 aa).

2 disordered regions span residues 125–175 and 196–313; these read RTLQ…PMRF and GPGP…SPEL. A compositionally biased stretch (gly residues) spans 141-150; it reads GAEGTTGGGS. Over residues 289–298 the composition is skewed to basic and acidic residues; sequence RARDGGDGRE. The segment at 326–409 adopts a 3CxxC-type zinc-finger fold; sequence KYGYYHCKDC…RQDLCGRCKG (84 aa).

The protein belongs to the ZAR1 family. Interacts with YBX2. Ubiquitinated and degradaded by the proteasome during oocyte meiotic maturation, leading to MARDO (mitochondria-associated ribonucleoprotein domain) membraneless compartment dissolution. In terms of tissue distribution, ovary and testis.

The protein resides in the cytoplasm. The protein localises to the cytoplasmic ribonucleoprotein granule. In terms of biological role, mRNA-binding protein that mediates formation of MARDO (mitochondria-associated ribonucleoprotein domain), a membraneless compartment that stores maternal mRNAs in oocytes. MARDO assembly around mitochondria is directed by an increase in mitochondrial membrane potential during oocyte growth. Promotes formation of MARDO phase-separated membraneless compartment by undergoing liquid-liquid phase separation upon binding to maternal mRNAs. Binds to the 3'-UTR of maternal mRNAs. Maternal mRNAs stored in the MARDO are translationally repressed. Essential for female fertility and oocyte-to-embryo transition by coordinating maternal mRNA storage, translation and degradation. This chain is Zygote arrest protein 1, found in Homo sapiens (Human).